Reading from the N-terminus, the 144-residue chain is uncharacterized protein (144 aa).

This is an uncharacterized protein from Methanocaldococcus jannaschii (strain ATCC 43067 / DSM 2661 / JAL-1 / JCM 10045 / NBRC 100440) (Methanococcus jannaschii).